We begin with the raw amino-acid sequence, 752 residues long: Photosystem I P700 chlorophyll a apoprotein A1 (752 aa).

The next 8 membrane-spanning stretches (helical) occupy residues 73 to 96 (IFSA…FHGA), 159 to 182 (LYWI…FHYH), 198 to 222 (MNHH…HVAL), 294 to 312 (IAHH…GHMY), 349 to 372 (WHAQ…HHMY), 388 to 414 (LSLF…IFMV), 436 to 458 (SIIA…FYIH), and 533 to 551 (FMVH…LILL). The [4Fe-4S] cluster site is built by Cys575 and Cys584. 2 helical membrane passes run 591–612 (HVFL…HFSW) and 666–688 (ASAY…MFLF). His677 contributes to the chlorophyll a' binding site. The chlorophyll a site is built by Met685 and Tyr693. Trp694 contacts phylloquinone. Residues 726 to 746 (AVGLAHYLLGGIGTTWAFFLA) traverse the membrane as a helical segment.

The protein belongs to the PsaA/PsaB family. The PsaA/B heterodimer binds the P700 chlorophyll special pair and subsequent electron acceptors. PSI consists of a core antenna complex that captures photons, and an electron transfer chain that converts photonic excitation into a charge separation. The eukaryotic PSI reaction center is composed of at least 11 subunits. The cofactor is P700 is a chlorophyll a/chlorophyll a' dimer, A0 is one or more chlorophyll a, A1 is one or both phylloquinones and FX is a shared 4Fe-4S iron-sulfur center..

It is found in the plastid. The protein localises to the chloroplast thylakoid membrane. It carries out the reaction reduced [plastocyanin] + hnu + oxidized [2Fe-2S]-[ferredoxin] = oxidized [plastocyanin] + reduced [2Fe-2S]-[ferredoxin]. Functionally, psaA and PsaB bind P700, the primary electron donor of photosystem I (PSI), as well as the electron acceptors A0, A1 and FX. PSI is a plastocyanin/cytochrome c6-ferredoxin oxidoreductase, converting photonic excitation into a charge separation, which transfers an electron from the donor P700 chlorophyll pair to the spectroscopically characterized acceptors A0, A1, FX, FA and FB in turn. Oxidized P700 is reduced on the lumenal side of the thylakoid membrane by plastocyanin or cytochrome c6. The chain is Photosystem I P700 chlorophyll a apoprotein A1 from Phaeodactylum tricornutum (strain CCAP 1055/1).